A 244-amino-acid chain; its full sequence is 1-(5-phosphoribosyl)-5-[(5-phosphoribosylamino)methylideneamino] imidazole-4-carboxamide isomerase (244 aa).

Aspartate 10 functions as the Proton acceptor in the catalytic mechanism. The Proton donor role is filled by aspartate 132.

It belongs to the HisA/HisF family.

The protein localises to the cytoplasm. It carries out the reaction 1-(5-phospho-beta-D-ribosyl)-5-[(5-phospho-beta-D-ribosylamino)methylideneamino]imidazole-4-carboxamide = 5-[(5-phospho-1-deoxy-D-ribulos-1-ylimino)methylamino]-1-(5-phospho-beta-D-ribosyl)imidazole-4-carboxamide. It functions in the pathway amino-acid biosynthesis; L-histidine biosynthesis; L-histidine from 5-phospho-alpha-D-ribose 1-diphosphate: step 4/9. In Stenotrophomonas maltophilia (strain K279a), this protein is 1-(5-phosphoribosyl)-5-[(5-phosphoribosylamino)methylideneamino] imidazole-4-carboxamide isomerase.